Reading from the N-terminus, the 190-residue chain is Xanthine phosphoribosyltransferase (190 aa).

Xanthine is bound by residues L20 and N27. A 5-phospho-alpha-D-ribose 1-diphosphate-binding site is contributed by 128 to 132 (ANGKA). Xanthine is bound at residue K156.

This sequence belongs to the purine/pyrimidine phosphoribosyltransferase family. Xpt subfamily. In terms of assembly, homodimer.

It localises to the cytoplasm. It carries out the reaction XMP + diphosphate = xanthine + 5-phospho-alpha-D-ribose 1-diphosphate. Its pathway is purine metabolism; XMP biosynthesis via salvage pathway; XMP from xanthine: step 1/1. Converts the preformed base xanthine, a product of nucleic acid breakdown, to xanthosine 5'-monophosphate (XMP), so it can be reused for RNA or DNA synthesis. The polypeptide is Xanthine phosphoribosyltransferase (Stutzerimonas stutzeri (strain A1501) (Pseudomonas stutzeri)).